The following is an 874-amino-acid chain: Valine--tRNA ligase (874 aa).

Polar residues predominate over residues 1–10 (MTENSQQQPP). A disordered region spans residues 1–23 (MTENSQQQPPASEPELPTQYAPA). Positions 57-67 (PNVTGSLHLGH) match the 'HIGH' region motif. Positions 531-535 (KMSKS) match the 'KMSKS' region motif. Lys-534 contacts ATP. Positions 806-871 (IDIVAERKRL…ARIQAQLDRM (66 aa)) form a coiled coil.

This sequence belongs to the class-I aminoacyl-tRNA synthetase family. ValS type 1 subfamily. As to quaternary structure, monomer.

It localises to the cytoplasm. The enzyme catalyses tRNA(Val) + L-valine + ATP = L-valyl-tRNA(Val) + AMP + diphosphate. Catalyzes the attachment of valine to tRNA(Val). As ValRS can inadvertently accommodate and process structurally similar amino acids such as threonine, to avoid such errors, it has a 'posttransfer' editing activity that hydrolyzes mischarged Thr-tRNA(Val) in a tRNA-dependent manner. The sequence is that of Valine--tRNA ligase from Streptomyces avermitilis (strain ATCC 31267 / DSM 46492 / JCM 5070 / NBRC 14893 / NCIMB 12804 / NRRL 8165 / MA-4680).